The sequence spans 456 residues: Bifunctional protein GlmU (456 aa).

Residues 1-229 are pyrophosphorylase; sequence MSNSAMSVVI…LSEVEGVNNR (229 aa). UDP-N-acetyl-alpha-D-glucosamine-binding positions include 11 to 14, lysine 25, glutamine 76, 81 to 82, 103 to 105, glycine 140, glutamate 154, asparagine 169, and asparagine 227; these read LAAG, GT, and YGD. Aspartate 105 lines the Mg(2+) pocket. Residue asparagine 227 participates in Mg(2+) binding. Residues 230–250 are linker; the sequence is LQLSRLERIYQAEQSEKLLLA. The segment at 251–456 is N-acetyltransferase; the sequence is GVMLLDPARF…QGWQRPVKKK (206 aa). Residues arginine 333 and lysine 351 each coordinate UDP-N-acetyl-alpha-D-glucosamine. Histidine 363 functions as the Proton acceptor in the catalytic mechanism. UDP-N-acetyl-alpha-D-glucosamine contacts are provided by tyrosine 366 and asparagine 377. Acetyl-CoA-binding positions include alanine 380, 386–387, serine 405, alanine 423, and arginine 440; that span reads NY.

The protein in the N-terminal section; belongs to the N-acetylglucosamine-1-phosphate uridyltransferase family. This sequence in the C-terminal section; belongs to the transferase hexapeptide repeat family. In terms of assembly, homotrimer. Mg(2+) serves as cofactor.

Its subcellular location is the cytoplasm. It catalyses the reaction alpha-D-glucosamine 1-phosphate + acetyl-CoA = N-acetyl-alpha-D-glucosamine 1-phosphate + CoA + H(+). The enzyme catalyses N-acetyl-alpha-D-glucosamine 1-phosphate + UTP + H(+) = UDP-N-acetyl-alpha-D-glucosamine + diphosphate. Its pathway is nucleotide-sugar biosynthesis; UDP-N-acetyl-alpha-D-glucosamine biosynthesis; N-acetyl-alpha-D-glucosamine 1-phosphate from alpha-D-glucosamine 6-phosphate (route II): step 2/2. It participates in nucleotide-sugar biosynthesis; UDP-N-acetyl-alpha-D-glucosamine biosynthesis; UDP-N-acetyl-alpha-D-glucosamine from N-acetyl-alpha-D-glucosamine 1-phosphate: step 1/1. It functions in the pathway bacterial outer membrane biogenesis; LPS lipid A biosynthesis. Its function is as follows. Catalyzes the last two sequential reactions in the de novo biosynthetic pathway for UDP-N-acetylglucosamine (UDP-GlcNAc). The C-terminal domain catalyzes the transfer of acetyl group from acetyl coenzyme A to glucosamine-1-phosphate (GlcN-1-P) to produce N-acetylglucosamine-1-phosphate (GlcNAc-1-P), which is converted into UDP-GlcNAc by the transfer of uridine 5-monophosphate (from uridine 5-triphosphate), a reaction catalyzed by the N-terminal domain. The chain is Bifunctional protein GlmU from Serratia proteamaculans (strain 568).